The following is a 66-amino-acid chain: Phylloseptin-S6 (66 aa).

An N-terminal signal peptide occupies residues 1 to 22; sequence MAFLKKSLFLVLFLGLVSLSIC. Residues 23-46 constitute a propeptide that is removed on maturation; sequence EEEKRETEEEEHDQEEDDKSEEKR. The tract at residues 25-44 is disordered; sequence EKRETEEEEHDQEEDDKSEE. The span at 30–41 shows a compositional bias: acidic residues; sequence EEEEHDQEEDDK. Leucine 65 is modified (leucine amide).

This sequence belongs to the frog skin active peptide (FSAP) family. Phylloseptin subfamily. As to expression, expressed by the skin glands.

Its subcellular location is the secreted. The protein localises to the target cell membrane. Its function is as follows. Antimicrobial peptide with high activity against Gram-positive bacteria, low activity against Gram-negative bacteria, and moderate activity against fungi. Acts by causing bacterial membrane disruption inducing leakage of the intracellular content followed by cell death. It adopts an alpha-helical amphipathic structure in membrane environments. Also shows highly potent antiparasitic activity against Leishmania species. Shows moderate hemolytic activity on human erythrocytes. Is also active on human monocytes. This is Phylloseptin-S6 from Phyllomedusa sauvagei (Sauvage's leaf frog).